The chain runs to 1339 residues: Transcription factor tau subunit sfc3 (1339 aa).

Positions 470-515 are disordered; the sequence is MESNAEVSPDGMTLLPRKRGRPRKSANISVTSSPIRPSKNENNLPS. A DNA-binding region (a.T hook) is located at residues 485-497; that stretch reads PRKRGRPRKSANI. A compositionally biased stretch (polar residues) spans 495 to 514; it reads ANISVTSSPIRPSKNENNLP. 2 positions are modified to phosphoserine: Ser-595 and Ser-596. Positions 791–826 are disordered; sequence RRKSMPAEIKRHKESSETKPVDKEEVKKNEKEKDDP. The segment covering 798–826 has biased composition (basic and acidic residues); the sequence is EIKRHKESSETKPVDKEEVKKNEKEKDDP.

As to quaternary structure, component of the TFIIIC complex including sfc1, sfc3, sfc4, sfc6 and sfc7. The subunits are organized in two globular domains, tauA and tauB, connected by a proteolysis-sensitive and flexible linker. Interacts with sfc1, sfc4 and sfc6.

The protein resides in the nucleus envelope. TFIIIC mediates tRNA and 5S RNA gene activation by binding to intragenic promoter elements. Upstream of the transcription start site, TFIIIC assembles the initiation complex TFIIIB-TFIIIC-tDNA, which is sufficient for RNA polymerase III recruitment and function. Part of the tauB domain of TFIIIC that binds boxB DNA promoter sites of tRNA and similar genes. Cooperates with sfc6 in DNA binding. Localizes to chromatin insulator sequence without recruiting RNA polymerase III and plays a role in nuclear organization. This Schizosaccharomyces pombe (strain 972 / ATCC 24843) (Fission yeast) protein is Transcription factor tau subunit sfc3.